We begin with the raw amino-acid sequence, 427 residues long: Putative F-box protein At4g10740 (427 aa).

Residues 2–47 enclose the F-box domain; it reads RTTMSNLPKELVEDIVSRVPLHCLRAMRLTCKNWNALLESQSFKKM.

This Arabidopsis thaliana (Mouse-ear cress) protein is Putative F-box protein At4g10740.